The primary structure comprises 765 residues: ATP-dependent zinc metalloprotease FtsH (765 aa).

Residues 1–27 lie on the Cytoplasmic side of the membrane; it reads MSNTSNFNERVTENAKPPKNVKSIIWK. Residues 28 to 48 form a helical membrane-spanning segment; the sequence is TIGIIIVMAIIIGLILFYVLP. The Extracellular segment spans residues 49 to 213; it reads RNTIANISNI…NVQLPNQSTA (165 aa). Residues 214 to 234 traverse the membrane as a helical segment; that stretch reads ILTQFLTSIIPFVILIVIYIV. Over 235–765 the chain is Cytoplasmic; the sequence is IARRFSRTMG…EPTASTASSN (531 aa). ATP is bound at residue 314–321; sequence GPPGTGKT. Residue His536 coordinates Zn(2+). Glu537 is a catalytic residue. Residues His540 and Asp615 each coordinate Zn(2+). Basic and acidic residues predominate over residues 730-748; the sequence is KAAAEKEEQAEKAKLDHQS. A disordered region spans residues 730–765; it reads KAAAEKEEQAEKAKLDHQSDSAQPQEEPTASTASSN. Over residues 749–765 the composition is skewed to polar residues; the sequence is DSAQPQEEPTASTASSN.

It in the central section; belongs to the AAA ATPase family. This sequence in the C-terminal section; belongs to the peptidase M41 family. As to quaternary structure, homohexamer. Zn(2+) is required as a cofactor.

Its subcellular location is the cell membrane. Its function is as follows. Acts as a processive, ATP-dependent zinc metallopeptidase for both cytoplasmic and membrane proteins. Plays a role in the quality control of integral membrane proteins. This chain is ATP-dependent zinc metalloprotease FtsH, found in Mycoplasmoides gallisepticum (strain R(high / passage 156)) (Mycoplasma gallisepticum).